The chain runs to 66 residues: ATP synthase F(0) complex subunit 8 (66 aa).

A helical membrane pass occupies residues 8–24; sequence TWLTMILSMFLVLFIIF. Position 54 is an N6-acetyllysine; alternate (lysine 54). Lysine 54 bears the N6-succinyllysine; alternate mark. At lysine 57 the chain carries N6-acetyllysine.

It belongs to the ATPase protein 8 family. In terms of assembly, component of the ATP synthase complex composed at least of ATP5F1A/subunit alpha, ATP5F1B/subunit beta, ATP5MC1/subunit c (homooctomer), MT-ATP6/subunit a, MT-ATP8/subunit 8, ATP5ME/subunit e, ATP5MF/subunit f, ATP5MG/subunit g, ATP5MK/subunit k, ATP5MJ/subunit j, ATP5F1C/subunit gamma, ATP5F1D/subunit delta, ATP5F1E/subunit epsilon, ATP5PF/subunit F6, ATP5PB/subunit b, ATP5PD/subunit d, ATP5PO/subunit OSCP. ATP synthase complex consists of a soluble F(1) head domain (subunits alpha(3) and beta(3)) - the catalytic core - and a membrane F(0) domain - the membrane proton channel (subunits c, a, 8, e, f, g, k and j). These two domains are linked by a central stalk (subunits gamma, delta, and epsilon) rotating inside the F1 region and a stationary peripheral stalk (subunits F6, b, d, and OSCP). Interacts with PRICKLE3.

The protein resides in the mitochondrion membrane. Subunit 8, of the mitochondrial membrane ATP synthase complex (F(1)F(0) ATP synthase or Complex V) that produces ATP from ADP in the presence of a proton gradient across the membrane which is generated by electron transport complexes of the respiratory chain. ATP synthase complex consist of a soluble F(1) head domain - the catalytic core - and a membrane F(1) domain - the membrane proton channel. These two domains are linked by a central stalk rotating inside the F(1) region and a stationary peripheral stalk. During catalysis, ATP synthesis in the catalytic domain of F(1) is coupled via a rotary mechanism of the central stalk subunits to proton translocation. In vivo, can only synthesize ATP although its ATP hydrolase activity can be activated artificially in vitro. Part of the complex F(0) domain. The polypeptide is ATP synthase F(0) complex subunit 8 (Ovis aries (Sheep)).